The sequence spans 90 residues: DNA-directed RNA polymerase subunit Rpo5 (90 aa).

Belongs to the archaeal Rpo5/eukaryotic RPB5 RNA polymerase subunit family. In terms of assembly, part of the RNA polymerase complex.

Its subcellular location is the cytoplasm. It catalyses the reaction RNA(n) + a ribonucleoside 5'-triphosphate = RNA(n+1) + diphosphate. In terms of biological role, DNA-dependent RNA polymerase (RNAP) catalyzes the transcription of DNA into RNA using the four ribonucleoside triphosphates as substrates. The chain is DNA-directed RNA polymerase subunit Rpo5 from Aeropyrum pernix (strain ATCC 700893 / DSM 11879 / JCM 9820 / NBRC 100138 / K1).